A 178-amino-acid polypeptide reads, in one-letter code: Epididymal-specific lipocalin-9 (178 aa).

The first 16 residues, 1-16, serve as a signal peptide directing secretion; the sequence is MVLLLVLGLVLSLATA. N-linked (GlcNAc...) asparagine glycans are attached at residues asparagine 46, asparagine 68, and asparagine 129. Cysteine 83 and cysteine 176 form a disulfide bridge.

This sequence belongs to the calycin superfamily. Lipocalin family. As to expression, expressed in epididymis. Not detected in all other tissues tested.

It is found in the secreted. In Mus musculus (Mouse), this protein is Epididymal-specific lipocalin-9 (Lcn9).